Consider the following 208-residue polypeptide: MKQRPTGPDTTPRNRRGFGRDTAVASVCGLVVALMVGASYAAVPFYNWFCRVTGFNGTTQVAAAAPQGGALKRTIAVRFDSNTNGLPWSFAPETTEIEIPIGQVTTVYYKVTNRAAHETTGQAAYNVAPLTVGAYFQKINCFCFTDQTLGPHETRELPVVFYVDPALATDSDNDTLNSITLSYTFYPLRSAAPKPLAASEAGPRQGAL.

Residues 1 to 19 (MKQRPTGPDTTPRNRRGFG) are Cytoplasmic-facing. A helical; Signal-anchor for type II membrane protein transmembrane segment spans residues 20 to 42 (RDTAVASVCGLVVALMVGASYAA). Topologically, residues 43-208 (VPFYNWFCRV…SEAGPRQGAL (166 aa)) are periplasmic.

It belongs to the COX11/CtaG family.

The protein resides in the cell inner membrane. Exerts its effect at some terminal stage of cytochrome c oxidase synthesis, probably by being involved in the insertion of the copper B into subunit I. The chain is Cytochrome c oxidase assembly protein CtaG from Rhodopseudomonas palustris (strain BisA53).